A 448-amino-acid polypeptide reads, in one-letter code: Inositol hexakisphosphate kinase 2 (448 aa).

ATP-binding positions include 229–231 (ENL) and Asp242. Substrate contacts are provided by residues 238 to 246 (PCVLDLKMG), Lys244, and 258 to 265 (KAANQIRK). Position 405 (Asp405) interacts with ATP. His408 contributes to the substrate binding site.

It belongs to the inositol phosphokinase (IPK) family. In terms of tissue distribution, highly expressed in brain and lung, and at slightly lower levels in liver, kidney and testis.

It localises to the nucleus. It catalyses the reaction 1D-myo-inositol hexakisphosphate + ATP = 5-diphospho-1D-myo-inositol 1,2,3,4,6-pentakisphosphate + ADP. Its pathway is phospholipid metabolism; phosphatidylinositol metabolism. Functionally, converts inositol hexakisphosphate (InsP6) to diphosphoinositol pentakisphosphate (InsP7/PP-InsP5). May play a role in the regulation of Na(+)-dependent phosphate cotransport, possibly via its role in diphosphoinositol pentakisphosphate (InsP7/PP-InsP5) biosynthesis. This chain is Inositol hexakisphosphate kinase 2 (Ip6k2), found in Mus musculus (Mouse).